A 346-amino-acid polypeptide reads, in one-letter code: Nitrilase 3 (346 aa).

An N-acetylserine modification is found at serine 2. In terms of domain architecture, CN hydrolase spans valine 25–leucine 297. Glutamate 65 acts as the Proton acceptor in catalysis. Lysine 152 serves as the catalytic Proton donor. Cysteine 186 acts as the Nucleophile in catalysis.

Belongs to the carbon-nitrogen hydrolase superfamily. Nitrilase family.

It is found in the cell membrane. It catalyses the reaction a nitrile + 2 H2O = a carboxylate + NH4(+). Its function is as follows. Can convert indole-3-acetonitrile to the plant hormone indole-3-acetic acid. The protein is Nitrilase 3 (NIT3) of Arabidopsis thaliana (Mouse-ear cress).